We begin with the raw amino-acid sequence, 154 residues long: Endoribonuclease YbeY (154 aa).

The Zn(2+) site is built by His-118, His-122, and His-128.

This sequence belongs to the endoribonuclease YbeY family. Zn(2+) serves as cofactor.

It localises to the cytoplasm. Functionally, single strand-specific metallo-endoribonuclease involved in late-stage 70S ribosome quality control and in maturation of the 3' terminus of the 16S rRNA. In Chloroflexus aurantiacus (strain ATCC 29366 / DSM 635 / J-10-fl), this protein is Endoribonuclease YbeY.